The primary structure comprises 353 residues: Dihydroorotate dehydrogenase (quinone) (353 aa).

FMN contacts are provided by residues 66-70 (AGFDK) and T90. K70 lines the substrate pocket. 115 to 119 (NRMGF) is a binding site for substrate. Positions 143 and 176 each coordinate FMN. N176 is a binding site for substrate. S179 functions as the Nucleophile in the catalytic mechanism. N181 serves as a coordination point for substrate. The FMN site is built by K212 and T240. Substrate is bound at residue 241-242 (NT). Residues G264, G293, and 314 to 315 (YT) each bind FMN.

Belongs to the dihydroorotate dehydrogenase family. Type 2 subfamily. Monomer. The cofactor is FMN.

Its subcellular location is the cell membrane. It catalyses the reaction (S)-dihydroorotate + a quinone = orotate + a quinol. It functions in the pathway pyrimidine metabolism; UMP biosynthesis via de novo pathway; orotate from (S)-dihydroorotate (quinone route): step 1/1. Catalyzes the conversion of dihydroorotate to orotate with quinone as electron acceptor. This Mycolicibacterium gilvum (strain PYR-GCK) (Mycobacterium gilvum (strain PYR-GCK)) protein is Dihydroorotate dehydrogenase (quinone).